We begin with the raw amino-acid sequence, 194 residues long: Small ribosomal subunit protein uS4 (194 aa).

The residue at position 66 (Lys66) is an N6-acetyllysine. Residue Lys93 forms a Glycyl lysine isopeptide (Lys-Gly) (interchain with G-Cter in SUMO2) linkage. Residues 108–182 form the S4 RNA-binding domain; that stretch reads RRLQTQVFKL…VKRKNAKKGQ (75 aa). Position 116 is an N6-acetyllysine (Lys116). Lys139 is covalently cross-linked (Glycyl lysine isopeptide (Lys-Gly) (interchain with G-Cter in SUMO2)). Residue Ser153 is modified to Phosphoserine. Lys155 carries the post-translational modification N6-acetyllysine. The interval 162 to 194 is disordered; it reads RSPYGGGRPGRVKRKNAKKGQGGAGAGDDEEED. Ser163 carries the post-translational modification Phosphoserine.

It belongs to the universal ribosomal protein uS4 family. In terms of assembly, component of the small ribosomal subunit. Part of the small subunit (SSU) processome, composed of more than 70 proteins and the RNA chaperone small nucleolar RNA (snoRNA) U3.

It is found in the cytoplasm. The protein localises to the nucleus. The protein resides in the nucleolus. In terms of biological role, component of the small ribosomal subunit. The ribosome is a large ribonucleoprotein complex responsible for the synthesis of proteins in the cell. Part of the small subunit (SSU) processome, first precursor of the small eukaryotic ribosomal subunit. During the assembly of the SSU processome in the nucleolus, many ribosome biogenesis factors, an RNA chaperone and ribosomal proteins associate with the nascent pre-rRNA and work in concert to generate RNA folding, modifications, rearrangements and cleavage as well as targeted degradation of pre-ribosomal RNA by the RNA exosome. The sequence is that of Small ribosomal subunit protein uS4 (RPS9) from Papio anubis (Olive baboon).